The following is a 105-amino-acid chain: Urease subunit beta (105 aa).

It belongs to the urease beta subunit family. As to quaternary structure, heterotrimer of UreA (gamma), UreB (beta) and UreC (alpha) subunits. Three heterotrimers associate to form the active enzyme.

The protein localises to the cytoplasm. The catalysed reaction is urea + 2 H2O + H(+) = hydrogencarbonate + 2 NH4(+). Its pathway is nitrogen metabolism; urea degradation; CO(2) and NH(3) from urea (urease route): step 1/1. This Pseudomonas putida (strain W619) protein is Urease subunit beta.